Reading from the N-terminus, the 312-residue chain is Protein phosphatase 2A catalytic subunit B (312 aa).

Residues Asp-55, His-57, Asp-83, and Asn-115 each coordinate Mn(2+). His-116 (proton donor) is an active-site residue. Mn(2+) is bound by residues His-165 and His-240.

It belongs to the PPP phosphatase family. PP-2A subfamily. In terms of assembly, component of the Sca1 complex composed of at least gefA, gefH, scaA, phr, and the protein phosphatase 2A subunits pppA and pho2B. Mn(2+) is required as a cofactor.

The protein localises to the cell membrane. The catalysed reaction is O-phospho-L-seryl-[protein] + H2O = L-seryl-[protein] + phosphate. It catalyses the reaction O-phospho-L-threonyl-[protein] + H2O = L-threonyl-[protein] + phosphate. Its function is as follows. Component of the Sca1 complex, a regulator of cell motility, chemotaxis and signal relay. The Sca1 complex is recruited to the plasma membrane in a chemoattractant- and F-actin-dependent manner and is enriched at the leading edge of chemotaxing cells where it regulates F-actin dynamics and signal relay by controlling the activation of rasC and the downstream target of rapamycin complex 2 (TORC2)-Akt/protein kinase B (PKB) pathway. In Dictyostelium discoideum (Social amoeba), this protein is Protein phosphatase 2A catalytic subunit B.